Here is a 236-residue protein sequence, read N- to C-terminus: MATPHINAVEGAFAETVLFPGDPLRAKYIAETFLENVEQVTDVRNMLGFTGTYKGKRISVMGSGMGIPSCSIYAHELIKDYGVKNLIRVGTCGAISTDVKVRDVIIGMGACTDSRVNRLRFKDNDFAAIADYSLLSAVVDSAKAHGTKIRVGNVFSADLFYTPDPQMFDVMEKMGILGVEMEAAGLYGVAHELGAKALCVVTVSDHIRTGEKTTSDERQTTFSDMIIMTLDAALTL.

A purine D-ribonucleoside is bound at residue H5. Phosphate contacts are provided by residues G21, R25, R44, and 88-91 (RVGT). A purine D-ribonucleoside-binding positions include 180-182 (EME) and 204-205 (SD). The active-site Proton donor is the D205.

This sequence belongs to the PNP/UDP phosphorylase family. In terms of assembly, homohexamer; trimer of homodimers.

It catalyses the reaction a purine D-ribonucleoside + phosphate = a purine nucleobase + alpha-D-ribose 1-phosphate. The catalysed reaction is a purine 2'-deoxy-D-ribonucleoside + phosphate = a purine nucleobase + 2-deoxy-alpha-D-ribose 1-phosphate. In terms of biological role, catalyzes the reversible phosphorolytic breakdown of the N-glycosidic bond in the beta-(deoxy)ribonucleoside molecules, with the formation of the corresponding free purine bases and pentose-1-phosphate. This is Purine nucleoside phosphorylase DeoD-type from Shewanella frigidimarina (strain NCIMB 400).